Consider the following 320-residue polypeptide: Endochitinase (320 aa).

The signal sequence occupies residues 1–23 (MKRTLKVSFFILCLLPLFLGSKA). The 41-residue stretch at 24 to 64 (EQCGSQAGGAVCPNGLCCSKFGFCGSTDPYCGDGCQSQCKS) folds into the Chitin-binding type-1 domain. Disulfide bonds link Cys-26-Cys-41, Cys-35-Cys-47, Cys-40-Cys-54, Cys-58-Cys-62, Cys-101-Cys-163, Cys-175-Cys-182, and Cys-281-Cys-313. Residue Glu-145 is the Proton donor of the active site.

It belongs to the glycosyl hydrolase 19 family. Chitinase class I subfamily.

The enzyme catalyses Random endo-hydrolysis of N-acetyl-beta-D-glucosaminide (1-&gt;4)-beta-linkages in chitin and chitodextrins.. Its function is as follows. Defense against chitin-containing fungal pathogens. The chain is Endochitinase from Pisum sativum (Garden pea).